Reading from the N-terminus, the 115-residue chain is NADH-ubiquinone oxidoreductase chain 3 (115 aa).

Helical transmembrane passes span 4–24 (LTVLSVNIALSTCLITIAFWL), 55–75 (FFLVAITFLLFDLEIALLLPL), and 87–107 (MMLTAFILVSVLALGLAYEWM).

This sequence belongs to the complex I subunit 3 family. Core subunit of respiratory chain NADH dehydrogenase (Complex I) which is composed of 45 different subunits. Interacts with TMEM186. Interacts with TMEM242.

The protein localises to the mitochondrion inner membrane. It catalyses the reaction a ubiquinone + NADH + 5 H(+)(in) = a ubiquinol + NAD(+) + 4 H(+)(out). In terms of biological role, core subunit of the mitochondrial membrane respiratory chain NADH dehydrogenase (Complex I) which catalyzes electron transfer from NADH through the respiratory chain, using ubiquinone as an electron acceptor. Essential for the catalytic activity of complex I. This is NADH-ubiquinone oxidoreductase chain 3 from Peromyscus slevini (Slevin's mouse).